The primary structure comprises 681 residues: Potassium-transporting ATPase ATP-binding subunit 1 (681 aa).

A run of 4 helical transmembrane segments spans residues 30–50 (LLVY…FFGI), 59–79 (LAIA…EAIA), 216–236 (ILLV…LPFT), and 255–275 (IALL…SIGI). Aspartate 306 (4-aspartylphosphate intermediate) is an active-site residue. ATP contacts are provided by residues aspartate 343, glutamate 347, 376 to 383 (FTATTRMS), and lysine 394. 2 residues coordinate Mg(2+): aspartate 517 and aspartate 521. 3 consecutive transmembrane segments (helical) span residues 587 to 607 (FAII…LNLM), 615 to 635 (AILS…PLSL), and 661 to 681 (LIAP…LGIV).

It belongs to the cation transport ATPase (P-type) (TC 3.A.3) family. Type IA subfamily. As to quaternary structure, the system is composed of three essential subunits: KdpA, KdpB and KdpC.

It is found in the cell membrane. It carries out the reaction K(+)(out) + ATP + H2O = K(+)(in) + ADP + phosphate + H(+). Functionally, part of the high-affinity ATP-driven potassium transport (or Kdp) system, which catalyzes the hydrolysis of ATP coupled with the electrogenic transport of potassium into the cytoplasm. This subunit is responsible for energy coupling to the transport system and for the release of the potassium ions to the cytoplasm. This Listeria innocua serovar 6a (strain ATCC BAA-680 / CLIP 11262) protein is Potassium-transporting ATPase ATP-binding subunit 1.